Here is a 452-residue protein sequence, read N- to C-terminus: Mitochondrial import inner membrane translocase subunit TIM44 (452 aa).

T128 bears the Phosphothreonine mark. 166–173 (SGEKLGKT) is a binding site for ATP. An N6-succinyllysine modification is found at K177. Residue S180 is modified to Phosphoserine. K217 carries the post-translational modification N6-succinyllysine.

Belongs to the Tim44 family. Probable component of the PAM complex at least composed of a mitochondrial HSP70 protein, GRPEL1 or GRPEL2, TIMM44, TIMM16/PAM16 and TIMM14/DNAJC19. The complex interacts with the TIMM23 component of the TIM23 complex. Interacts with SLC25A4/ANT1 and SLC25A5/ANT2; leading to inhibit the presequence translocase TIMM23, thereby promoting stabilization of PINK1.

It localises to the mitochondrion inner membrane. Functionally, essential component of the PAM complex, a complex required for the translocation of transit peptide-containing proteins from the inner membrane into the mitochondrial matrix in an ATP-dependent manner. Recruits mitochondrial HSP70 to drive protein translocation into the matrix using ATP as an energy source. The protein is Mitochondrial import inner membrane translocase subunit TIM44 (Timm44) of Mus musculus (Mouse).